Reading from the N-terminus, the 383-residue chain is Succinyl-diaminopimelate desuccinylase (383 aa).

H74 is a Zn(2+) binding site. Residue D76 is part of the active site. D107 lines the Zn(2+) pocket. The active-site Proton acceptor is E141. 3 residues coordinate Zn(2+): E142, E170, and H356.

It belongs to the peptidase M20A family. DapE subfamily. Homodimer. It depends on Zn(2+) as a cofactor. The cofactor is Co(2+).

It carries out the reaction N-succinyl-(2S,6S)-2,6-diaminopimelate + H2O = (2S,6S)-2,6-diaminopimelate + succinate. It participates in amino-acid biosynthesis; L-lysine biosynthesis via DAP pathway; LL-2,6-diaminopimelate from (S)-tetrahydrodipicolinate (succinylase route): step 3/3. Its function is as follows. Catalyzes the hydrolysis of N-succinyl-L,L-diaminopimelic acid (SDAP), forming succinate and LL-2,6-diaminopimelate (DAP), an intermediate involved in the bacterial biosynthesis of lysine and meso-diaminopimelic acid, an essential component of bacterial cell walls. This is Succinyl-diaminopimelate desuccinylase from Ralstonia nicotianae (strain ATCC BAA-1114 / GMI1000) (Ralstonia solanacearum).